Here is a 303-residue protein sequence, read N- to C-terminus: Phenoloxidase-activating factor 2 (303 aa).

The tract at residues 1–24 (PDRRPPEDPITPPPPTKEEQRAGC) is disordered. In terms of domain architecture, Peptidase S1 spans 36–292 (IIGDKDGEAK…LRDWIDDKVA (257 aa)). Intrachain disulfides connect cysteine 173/cysteine 247, cysteine 206/cysteine 227, and cysteine 237/cysteine 268.

This sequence belongs to the peptidase S1 family. As to quaternary structure, heterodimer.

The protein localises to the secreted. In terms of biological role, binds and activates processed prophenoloxidases PPO1 and PPO2 and thus is involved in the activation of the prophenoloxidase cascade probably following the recognition of pathogen-derived products. Binds the A.niger cell wall component alpha-1,3-glucan, a fungal pathogen-associated molecular pattern (PAMP) that activates the host immune response. The sequence is that of Phenoloxidase-activating factor 2 (LOC113510063) from Galleria mellonella (Greater wax moth).